Here is a 1647-residue protein sequence, read N- to C-terminus: MAP kinase-activating death domain protein (1647 aa).

In terms of domain architecture, uDENN spans 14–268; sequence YLVIVGARHP…VPVSGQKRVD (255 aa). The span at 108 to 122 shows a compositional bias: basic and acidic residues; it reads EKGEGGAGSRGKEGT. Positions 108–168 are disordered; it reads EKGEGGAGSR…GKRRAKAGSR (61 aa). Over residues 128–141 the composition is skewed to low complexity; the sequence is SEEGGTESSESGSS. Over residues 142 to 157 the composition is skewed to polar residues; the sequence is LQPLSADSTPDVNQSP. Phosphoserine is present on Ser-156. A compositionally biased stretch (basic residues) spans 158–167; that stretch reads RGKRRAKAGS. Residues 289 to 429 form the cDENN domain; that stretch reads RFTLVDFPLH…ESLELKKHLK (141 aa). The region spanning 431 to 565 is the dDENN domain; the sequence is ALASMSLNTQ…LNPTNYAFQR (135 aa). 2 disordered regions span residues 604–636 and 678–842; these read ALSVPPERDSDSEPTDDSGSDSMDYDDSSSSYS and NQKE…STEG. A compositionally biased stretch (acidic residues) spans 615 to 630; the sequence is SEPTDDSGSDSMDYDD. A phosphoserine mark is found at Ser-689 and Ser-692. Over residues 689–699 the composition is skewed to polar residues; it reads SENSQENPPLR. Over residues 700–712 the composition is skewed to low complexity; the sequence is SSSSTTASSSPST. Over residues 750-768 the composition is skewed to basic and acidic residues; it reads NVDRRQAEIGEGSVRRRIY. The segment covering 790-804 has biased composition (polar residues); sequence ESYTPRFSQHVSGNR. A phosphoserine mark is found at Ser-813, Ser-818, and Ser-820. The segment covering 827–840 has biased composition (low complexity); it reads RASSPNSTVSNTST. Residues Ser-858, Ser-862, Ser-916, Ser-921, and Ser-930 each carry the phosphoserine modification. Disordered stretches follow at residues 913-941, 1051-1110, and 1146-1243; these read QKSSVIKHSPTVKREPPSPQGRSSNSSEN, KEPD…DTRS, and VFDL…DSEI. Polar residues predominate over residues 932 to 941; that stretch reads QGRSSNSSEN. Ser-1059 bears the Phosphoserine mark. Phosphothreonine occurs at positions 1061 and 1066. A Phosphoserine modification is found at Ser-1110. Composition is skewed to polar residues over residues 1158–1173, 1189–1207, and 1234–1243; these read QISADSGVSLTSSSQR, RSSSQDSEVSTVVSNSSGE, and SRGTLSDSEI. The residue at position 1237 (Thr-1237) is a Phosphothreonine. Phosphoserine is present on residues Ser-1239 and Ser-1270. Residues 1340-1415 form the Death domain; the sequence is GMDQGPQEMI…GLVYSQQINE (76 aa).

This sequence belongs to the MADD family. Interacts (via death domain) with TNFRSF1A (via death domain). Interacts with PIDD1. Interacts with YWHAZ. Interacts (via death domain) with KIF1B; links the motor KIF1B to Rab3-carrying vesicles in anterograde synaptic vesicle transport. Interacts with KIF1A. Interacts (via uDENN domain) with RAB3A, RAB3B, RAB3C and RAB3D; the GTP-bound form of the Rab proteins is preferred for interaction. Expressed in testis, ovary, brain and heart. Expressed in spleen, thymus, prostate, testis, ovary, small instestine and colon. Expressed in liver. As to expression, not detected in the brain, breast, kidney, lung, ovary, pancreas, testis, uterus, stomach and thyroid. In terms of tissue distribution, expressed in the brain, breast, kidney, lung, ovary, pancreas, testis, uterus, stomach and thyroid.

It localises to the cell membrane. Its subcellular location is the cytoplasm. It is found in the cell projection. The protein resides in the axon. Guanyl-nucleotide exchange factor that regulates small GTPases of the Rab family. Converts GDP-bound inactive form of RAB27A and RAB27B to the GTP-bound active forms. Converts GDP-bound inactive form of RAB3A, RAB3C and RAB3D to the GTP-bound active forms, GTPases involved in synaptic vesicle exocytosis and vesicle secretion. Plays a role in synaptic vesicle formation and in vesicle trafficking at the neuromuscular junction. Involved in up-regulating a post-docking step of synaptic exocytosis in central synapses. Probably by binding to the motor proteins KIF1B and KIF1A, mediates motor-dependent transport of GTP-RAB3A-positive vesicles to the presynaptic nerve terminals. Plays a role in TNFA-mediated activation of the MAPK pathway, including ERK1/2. May link TNFRSF1A with MAP kinase activation. May be involved in the regulation of TNFA-induced apoptosis. In Homo sapiens (Human), this protein is MAP kinase-activating death domain protein.